Reading from the N-terminus, the 86-residue chain is Gas vesicle protein M (86 aa).

Belongs to the gas vesicle GvpA family. As to quaternary structure, gvpF to GvpM interact with each other in vitro, and may form multi-subunit complex(es). Might interact with GvpA.

It is found in the gas vesicle. Its function is as follows. Proteins GvpF to GvpM might be involved in nucleating gas vesicle formation. A minor component of the gas vesicle. Gas vesicles are small, hollow, gas filled protein structures found in some microorganisms. They allow positioning of halobacteria at the optimal depth for growth in the poorly aerated, shallow brine pools of their habitat. In terms of biological role, expression of a 9.5 kb mc-vac DNA fragment containing 2 divergently transcribed regions (gvpD-gvpE-gvpF-gvpG-gvpH-gvpI-gvpJ-gvpK-gvpL-gvpM and gvpA-gvpC-gvpN-gvpO) allows H.volcanii to produce gas vesicles. In Haloferax mediterranei (strain ATCC 33500 / DSM 1411 / JCM 8866 / NBRC 14739 / NCIMB 2177 / R-4) (Halobacterium mediterranei), this protein is Gas vesicle protein M.